The sequence spans 395 residues: G-protein coupled receptor 182 (395 aa).

Topologically, residues 1 to 53 (MSVIPSSRPVSTLAPDNDFREIHNWTELLHLFNQTFSDCHMELNENTKQVVLF) are extracellular. 2 N-linked (GlcNAc...) asparagine glycosylation sites follow: asparagine 24 and asparagine 33. Residues 54–75 (VFYLAIFVVGLVENVLVICVNC) traverse the membrane as a helical segment. The Cytoplasmic segment spans residues 76–86 (RRSGRVGMLNL). A helical membrane pass occupies residues 87–109 (YILNMAVADLGIILSLPVWMLEV). At 110–123 (MLEYTWLWGSFSCR) the chain is on the extracellular side. Cysteine 122 and cysteine 198 are joined by a disulfide. A helical membrane pass occupies residues 124–145 (FIHYFYLANMYSSIFFLTCLSI). Topologically, residues 146-166 (DRYVTLTNTSPSWQRHQHRIR) are cytoplasmic. Residues 167-189 (RAVCAGVWVLSAIIPLPEVVHIQ) form a helical membrane-spanning segment. Over 190 to 213 (LLDGSEPMCLFLAPFETYSAWALA) the chain is Extracellular. The chain crosses the membrane as a helical span at residues 214 to 235 (VALSATILGFLLPFPLIAVFNI). Residues 236-254 (LSACRLRRQGQTESRRHCL) are Cytoplasmic-facing. The chain crosses the membrane as a helical span at residues 255–276 (LMWAYIVVFVICWLPYHVTMLL). Residues 277-295 (LTLHTTHIFLHCNLVNFLY) lie on the Extracellular side of the membrane. A helical transmembrane segment spans residues 296 to 316 (FFYEIIDCFSMLHCVANPILY). The Cytoplasmic portion of the chain corresponds to 317-395 (NFLSPSFRGR…RTPHLHSAIP (79 aa)). The residue at position 329 (serine 329) is a Phosphoserine.

Belongs to the G-protein coupled receptor 1 family. As to expression, expressed in a wide variety of peripheral tissues in the adult rat with prominent expression in lung, testis, adrenal and liver.

The protein resides in the cell membrane. In terms of biological role, orphan receptor. In Rattus norvegicus (Rat), this protein is G-protein coupled receptor 182 (Gpr182).